The primary structure comprises 310 residues: Glutaminase 1 (310 aa).

Substrate-binding residues include Ser66, Asn117, Glu161, Asn168, Tyr192, Tyr244, and Val262. Lys294 is subject to N6-acetyllysine.

It belongs to the glutaminase family. In terms of assembly, homotetramer.

It carries out the reaction L-glutamine + H2O = L-glutamate + NH4(+). This is Glutaminase 1 from Shigella flexneri.